The primary structure comprises 341 residues: Cyclic GMP-AMP synthase-like receptor (341 aa).

ATP-binding positions include Ser-64 and 77-79; that span reads EFD. The Mg(2+) site is built by Glu-77, Asp-79, and Asp-172. Position 172 (Asp-172) interacts with GTP. ATP contacts are provided by residues Lys-230 and 246-250; that span reads SYHIK. Glu-258 serves as a coordination point for Mn(2+).

The protein belongs to the mab-21 family. The cofactor is Mg(2+). It depends on Mn(2+) as a cofactor.

It carries out the reaction GTP + ATP = 2',3'-cGAMP + 2 diphosphate. The enzyme catalyses GTP + ATP = pppGp(2'-5')A + diphosphate. It catalyses the reaction pppGp(2'-5')A = 2',3'-cGAMP + diphosphate. Nucleotidyltransferase that catalyzes the formation of cyclic GMP-AMP (2',3'-cGAMP) from ATP and GTP and plays a key role in innate immunity. Acts as a key sensor of double-stranded RNA (dsRNA), the presence of dsRNA in the cytoplasm being a danger signal that triggers the immune responses. Directly binds dsRNA, activating the nucleotidyltransferase activity, leading to synthesis of 2',3'-cGAMP, a second messenger that binds to and activates Sting, thereby triggering the immune response via activation of the NF-kappa-B transcription factor. This chain is Cyclic GMP-AMP synthase-like receptor, found in Hydra vulgaris (Hydra).